The primary structure comprises 183 residues: Ribosome-recycling factor (183 aa).

Belongs to the RRF family.

It is found in the cytoplasm. Functionally, responsible for the release of ribosomes from messenger RNA at the termination of protein biosynthesis. May increase the efficiency of translation by recycling ribosomes from one round of translation to another. In Deinococcus radiodurans (strain ATCC 13939 / DSM 20539 / JCM 16871 / CCUG 27074 / LMG 4051 / NBRC 15346 / NCIMB 9279 / VKM B-1422 / R1), this protein is Ribosome-recycling factor.